Here is a 160-residue protein sequence, read N- to C-terminus: Endoribonuclease YbeY (160 aa).

Residues H111, H115, and H121 each coordinate Zn(2+).

It belongs to the endoribonuclease YbeY family. Zn(2+) is required as a cofactor.

The protein resides in the cytoplasm. Its function is as follows. Single strand-specific metallo-endoribonuclease involved in late-stage 70S ribosome quality control and in maturation of the 3' terminus of the 16S rRNA. The protein is Endoribonuclease YbeY of Stutzerimonas stutzeri (strain A1501) (Pseudomonas stutzeri).